Reading from the N-terminus, the 234-residue chain is Large ribosomal subunit protein uL1 (234 aa).

This sequence belongs to the universal ribosomal protein uL1 family. As to quaternary structure, part of the 50S ribosomal subunit.

Binds directly to 23S rRNA. The L1 stalk is quite mobile in the ribosome, and is involved in E site tRNA release. Functionally, protein L1 is also a translational repressor protein, it controls the translation of the L11 operon by binding to its mRNA. In Pectobacterium atrosepticum (strain SCRI 1043 / ATCC BAA-672) (Erwinia carotovora subsp. atroseptica), this protein is Large ribosomal subunit protein uL1.